Reading from the N-terminus, the 410-residue chain is SPbeta prophage-derived uncharacterized protein YonV (410 aa).

The protein is SPbeta prophage-derived uncharacterized protein YonV (yonV) of Bacillus subtilis (strain 168).